We begin with the raw amino-acid sequence, 283 residues long: Orotidine 5'-phosphate decarboxylase (283 aa).

Catalysis depends on Lys-97, which acts as the Proton donor.

It belongs to the OMP decarboxylase family. Type 2 subfamily.

The enzyme catalyses orotidine 5'-phosphate + H(+) = UMP + CO2. It participates in pyrimidine metabolism; UMP biosynthesis via de novo pathway; UMP from orotate: step 2/2. This Clostridium botulinum (strain Okra / Type B1) protein is Orotidine 5'-phosphate decarboxylase.